A 451-amino-acid polypeptide reads, in one-letter code: Cyclin-dependent kinase 18 (451 aa).

Ser-12, Ser-51, Ser-66, Ser-75, and Ser-109 each carry phosphoserine. The Protein kinase domain occupies 121–402 (YVKLDKLGEG…AEAALNHPYF (282 aa)). Residues 127-135 (LGEGTYATV) and Lys-150 contribute to the ATP site. Asp-242 functions as the Proton acceptor in the catalytic mechanism. A phosphoserine mark is found at Ser-417 and Ser-420.

Belongs to the protein kinase superfamily. CMGC Ser/Thr protein kinase family. CDC2/CDKX subfamily. As to expression, in brain, kidney, intestine and at a much lower level, in fetal tissues.

It carries out the reaction L-seryl-[protein] + ATP = O-phospho-L-seryl-[protein] + ADP + H(+). The enzyme catalyses L-threonyl-[protein] + ATP = O-phospho-L-threonyl-[protein] + ADP + H(+). In terms of biological role, may play a role in signal transduction cascades in terminally differentiated cells. This chain is Cyclin-dependent kinase 18 (Cdk18), found in Mus musculus (Mouse).